The sequence spans 567 residues: Glucose-6-phosphate isomerase, cytosolic B (567 aa).

D-glucose 6-phosphate is bound by residues 156 to 157, 212 to 217, Gln356, Glu360, His391, and Lys516; these read GS and SKTFTT. Residue Glu360 is the Proton donor of the active site. Active-site residues include His391 and Lys516.

It belongs to the GPI family. As to quaternary structure, homodimer.

It localises to the cytoplasm. It catalyses the reaction alpha-D-glucose 6-phosphate = beta-D-fructose 6-phosphate. It participates in carbohydrate degradation; glycolysis; D-glyceraldehyde 3-phosphate and glycerone phosphate from D-glucose: step 2/4. Catalyzes the conversion of glucose-6-phosphate to fructose-6-phosphate, the second step in glycolysis, and the reverse reaction during gluconeogenesis. The chain is Glucose-6-phosphate isomerase, cytosolic B from Oryza sativa subsp. japonica (Rice).